A 273-amino-acid chain; its full sequence is DnaJ homolog subfamily C member 27 (273 aa).

GTP is bound by residues 23 to 30 (GNAEVGKS), 71 to 75 (DMAGH), and 134 to 137 (NKID). The J domain occupies 217 to 273 (DSWDMLGVKPGATRDEVNKAYRKLAVLLHPDKCVAPGSEDAFKAVVNARTALLKNIK).

Belongs to the small GTPase superfamily. Rab family.

It is found in the nucleus. GTPase possibly involved in regulation of the MEK/ERK pathway. The chain is DnaJ homolog subfamily C member 27 (DNAJC27) from Gallus gallus (Chicken).